The following is a 134-amino-acid chain: Large ribosomal subunit protein bL20 (134 aa).

It belongs to the bacterial ribosomal protein bL20 family.

In terms of biological role, binds directly to 23S ribosomal RNA and is necessary for the in vitro assembly process of the 50S ribosomal subunit. It is not involved in the protein synthesizing functions of that subunit. The protein is Large ribosomal subunit protein bL20 of Brucella abortus (strain S19).